Here is a 312-residue protein sequence, read N- to C-terminus: Ribosomal protein L11 methyltransferase (312 aa).

The S-adenosyl-L-methionine site is built by Thr-162, Gly-183, Asp-205, and Asn-248.

This sequence belongs to the methyltransferase superfamily. PrmA family.

It is found in the cytoplasm. The enzyme catalyses L-lysyl-[protein] + 3 S-adenosyl-L-methionine = N(6),N(6),N(6)-trimethyl-L-lysyl-[protein] + 3 S-adenosyl-L-homocysteine + 3 H(+). Functionally, methylates ribosomal protein L11. The protein is Ribosomal protein L11 methyltransferase of Bacillus cytotoxicus (strain DSM 22905 / CIP 110041 / 391-98 / NVH 391-98).